Consider the following 219-residue polypeptide: Redox-sensing transcriptional repressor Rex (219 aa).

The segment at residues 17–56 is a DNA-binding region (H-T-H motif); the sequence is VYLRVLDNLVKRDIEVVSSKSLSKETGFTAEQIRKDLAFF. NAD(+) is bound at residue 91–96; sequence GAGHLG.

It belongs to the transcriptional regulatory Rex family. As to quaternary structure, homodimer.

The protein localises to the cytoplasm. Modulates transcription in response to changes in cellular NADH/NAD(+) redox state. This Natranaerobius thermophilus (strain ATCC BAA-1301 / DSM 18059 / JW/NM-WN-LF) protein is Redox-sensing transcriptional repressor Rex.